The primary structure comprises 372 residues: ATP phosphoribosyltransferase regulatory subunit (372 aa).

It belongs to the class-II aminoacyl-tRNA synthetase family. HisZ subfamily. Heteromultimer composed of HisG and HisZ subunits.

It is found in the cytoplasm. The protein operates within amino-acid biosynthesis; L-histidine biosynthesis; L-histidine from 5-phospho-alpha-D-ribose 1-diphosphate: step 1/9. Functionally, required for the first step of histidine biosynthesis. May allow the feedback regulation of ATP phosphoribosyltransferase activity by histidine. The polypeptide is ATP phosphoribosyltransferase regulatory subunit (Rhizobium rhizogenes (strain K84 / ATCC BAA-868) (Agrobacterium radiobacter)).